A 240-amino-acid chain; its full sequence is LexA repressor (240 aa).

Positions 26 to 46 (FDEMKEALDLASKSGIHRLIT) form a DNA-binding region, H-T-H motif. Catalysis depends on for autocatalytic cleavage activity residues S161 and K199.

Belongs to the peptidase S24 family. As to quaternary structure, homodimer.

The enzyme catalyses Hydrolysis of Ala-|-Gly bond in repressor LexA.. Functionally, represses a number of genes involved in the response to DNA damage (SOS response), including recA and lexA. In the presence of single-stranded DNA, RecA interacts with LexA causing an autocatalytic cleavage which disrupts the DNA-binding part of LexA, leading to derepression of the SOS regulon and eventually DNA repair. This chain is LexA repressor, found in Brucella melitensis biotype 1 (strain ATCC 23456 / CCUG 17765 / NCTC 10094 / 16M).